The sequence spans 383 residues: Putative glutamate--cysteine ligase 2-2 (383 aa).

The interval arginine 35–glycine 56 is disordered.

This sequence belongs to the glutamate--cysteine ligase type 2 family. YbdK subfamily.

The catalysed reaction is L-cysteine + L-glutamate + ATP = gamma-L-glutamyl-L-cysteine + ADP + phosphate + H(+). In terms of biological role, ATP-dependent carboxylate-amine ligase which exhibits weak glutamate--cysteine ligase activity. This is Putative glutamate--cysteine ligase 2-2 from Frankia alni (strain DSM 45986 / CECT 9034 / ACN14a).